Here is a 500-residue protein sequence, read N- to C-terminus: Lysine--tRNA ligase (500 aa).

Mg(2+)-binding residues include E410 and E417.

The protein belongs to the class-II aminoacyl-tRNA synthetase family. Homodimer. Mg(2+) is required as a cofactor.

It is found in the cytoplasm. The enzyme catalyses tRNA(Lys) + L-lysine + ATP = L-lysyl-tRNA(Lys) + AMP + diphosphate. This Pseudomonas putida (strain W619) protein is Lysine--tRNA ligase.